The sequence spans 58 residues: Succinate dehydrogenase subunit 8A, mitochondrial (58 aa).

As to quaternary structure, component of complex II composed of eight subunits in plants: four classical SDH subunits SDH1, SDH2, SDH3 and SDH4 (a flavoprotein (FP), an iron-sulfur protein (IP), and a cytochrome b composed of a large and a small subunit.), as well as four subunits unknown in mitochondria from bacteria and heterotrophic eukaryotes.

The protein resides in the mitochondrion inner membrane. Its pathway is carbohydrate metabolism; tricarboxylic acid cycle. In Oryza sativa subsp. japonica (Rice), this protein is Succinate dehydrogenase subunit 8A, mitochondrial.